We begin with the raw amino-acid sequence, 207 residues long: A disintegrin and metalloproteinase with thrombospondin motifs 5 (207 aa).

In terms of domain architecture, Peptidase M12B spans 1–74 (HAAFTVAHEI…GHGNCLLDLP (74 aa)). His-8 contacts Zn(2+). Residue Glu-9 is part of the active site. Zn(2+) contacts are provided by His-12 and His-18. Disulfide bonds link Cys-24–Cys-53, Cys-95–Cys-117, Cys-106–Cys-127, Cys-112–Cys-146, and Cys-140–Cys-151. In terms of domain architecture, Disintegrin spans 83–164 (ELPGQTYDAS…TKKKYYSTSS (82 aa)). N-linked (GlcNAc...) asparagine glycosylation is present at Asn-96. Residues 165–205 (HGNWGSWGSWGQCSRSCGGGVQFAYRHCNNPAPKNNGRYCT) form the TSP type-1 domain. 2 C-linked (Man) tryptophan glycosylation sites follow: Trp-168 and Trp-171. Ser-180 carries O-linked (Fuc...) serine glycosylation.

Zn(2+) is required as a cofactor. Post-translationally, the precursor is cleaved by furin and PCSK7 outside of the cell. Glycosylated. Can be O-fucosylated by POFUT2 on a serine or a threonine residue found within the consensus sequence C1-X(2)-(S/T)-C2-G of the TSP type-1 repeat domains where C1 and C2 are the first and second cysteine residue of the repeat, respectively. Fucosylated repeats can then be further glycosylated by the addition of a beta-1,3-glucose residue by the glucosyltransferase, B3GALTL. Fucosylation mediates the efficient secretion of ADAMTS family members. Can also be C-glycosylated with one or two mannose molecules on tryptophan residues within the consensus sequence W-X-X-W of the TPRs, and N-glycosylated. These other glycosylations can also facilitate secretion.

Its subcellular location is the secreted. The protein resides in the extracellular space. It localises to the extracellular matrix. Its function is as follows. Metalloproteinase that plays an important role in connective tissue organization, development, inflammation and cell migration. Extracellular matrix (ECM) degrading enzyme that shows proteolytic activity toward the hyalectan group of chondroitin sulfate proteoglycans (CSPGs) including ACAN, VCAN, BCAN and NCAN. Cleavage within the hyalectans occurs at Glu-Xaa recognition motifs. Plays a role in embryonic development, including limb and cardiac morphogenesis, and skeletal muscle development through its VCAN remodeling properties. Cleaves VCAN in the pericellular matrix surrounding myoblasts, facilitating myoblast contact and fusion which is required for skeletal muscle development and regeneration. Participates in the development of brown adipose tissue and browning of white adipose tissue. Plays an important role for T-lymphocyte migration from draining lymph nodes following viral infection. The sequence is that of A disintegrin and metalloproteinase with thrombospondin motifs 5 (ADAMTS5) from Bos taurus (Bovine).